A 468-amino-acid chain; its full sequence is MAAPISTVAESKELRGLNLIAAHSHIRGLGVDVDSLQPRPASQGLVGQEKARKAAAVILQMVKEGKIAGRAVLIAGPPSTGKTAIAMGMAQSLGPDVPFTMLAASEIFSMEMSKTEALTQAFRKSIGVRIKEESEIIEGEVVEIQIDRSVTGGNKQGKLTIKTTDMETIYDMGTKMIDSMTKERVMAGDIISIDKSSGKITKLGRSYARSRDYDAMGADVKFVQCPEGELQVRKEIVHTVSLHEIDVINSRSQGFLALFSGDTGEIRSEVRDQINVKVAEWKEEGKAEIIPGVLFIDEVHMLDIECYSYINRALEAELAPIVIMASNRGHSRIRGTTYNSPHGLPLDFLDRVVIVSTQHYSADEIRQILAIRAQEEEIDLSPDALALLTKIGQESNLRYASNIITTSHLLSQKRKAKEVSVDDVQRSYRLFYDPARSVKFVNQYEQRFIGDQGNVNFTASNGDAMEIS.

Residue 76-83 (GPPSTGKT) coordinates ATP.

Belongs to the RuvB family. As to quaternary structure, may form heterododecamers with RVB1. Component of the SWR1 chromatin remodeling complex, the INO80 chromatin remodeling complex, and of the R2TP complex.

Its subcellular location is the nucleus. It catalyses the reaction ATP + H2O = ADP + phosphate + H(+). DNA helicase which participates in several chromatin remodeling complexes, including the SWR1 and the INO80 complexes. The SWR1 complex mediates the ATP-dependent exchange of histone H2A for the H2A variant HZT1 leading to transcriptional regulation of selected genes by chromatin remodeling. The INO80 complex remodels chromatin by shifting nucleosomes and is involved in DNA repair. Also involved in pre-rRNA processing. This Emericella nidulans (strain FGSC A4 / ATCC 38163 / CBS 112.46 / NRRL 194 / M139) (Aspergillus nidulans) protein is RuvB-like helicase 2 (rvb2).